The primary structure comprises 283 residues: 5'-nucleotidase SurE (283 aa).

Positions 14, 15, 47, and 105 each coordinate a divalent metal cation.

This sequence belongs to the SurE nucleotidase family. Requires a divalent metal cation as cofactor.

It localises to the cytoplasm. It carries out the reaction a ribonucleoside 5'-phosphate + H2O = a ribonucleoside + phosphate. In terms of biological role, nucleotidase that shows phosphatase activity on nucleoside 5'-monophosphates. The chain is 5'-nucleotidase SurE from Chlamydia trachomatis serovar D (strain ATCC VR-885 / DSM 19411 / UW-3/Cx).